The chain runs to 316 residues: MTKEFNHTTVLLHETVDMLDIKPNGIYVDATLGGAGHSEYLLSQLTDGGHLYAFDQDQTAIDHAHIRLASYIEKGQVTFIRDNFRNLKTRLAELGVTEIDGICYDLGVSSPQLDERERGFSYKQDAPLDMRMNREGHLTAYDVVNNYDYHDLVRIFFKYGEDKFSKQIARKIEQARAVKPIETTTELAELIKSAKPAKELKKKGHPAKQIFQAIRIEVNDELGAADESIQQAIDLLALDGRISVITFHSLEDRLTKQLFKEASTIDVPKGLPFIPDDLKAPLELVNRKPILPSQEELEANNRAHSAKLRVAKKVHK.

Residues 35 to 37 (AGH), aspartate 55, phenylalanine 84, aspartate 105, and glutamine 112 contribute to the S-adenosyl-L-methionine site.

The protein belongs to the methyltransferase superfamily. RsmH family.

Its subcellular location is the cytoplasm. It catalyses the reaction cytidine(1402) in 16S rRNA + S-adenosyl-L-methionine = N(4)-methylcytidine(1402) in 16S rRNA + S-adenosyl-L-homocysteine + H(+). Specifically methylates the N4 position of cytidine in position 1402 (C1402) of 16S rRNA. This chain is Ribosomal RNA small subunit methyltransferase H, found in Streptococcus suis (strain 05ZYH33).